We begin with the raw amino-acid sequence, 194 residues long: Protein GrpE (194 aa).

Over residues 1-24 (MEEKDKEEKVTGENLEPEDKNLEQ) the composition is skewed to basic and acidic residues. Residues 1–41 (MEEKDKEEKVTGENLEPEDKNLEQEDKEEVVGPQEEQQIDE) are disordered.

The protein belongs to the GrpE family. Homodimer.

The protein localises to the cytoplasm. Functionally, participates actively in the response to hyperosmotic and heat shock by preventing the aggregation of stress-denatured proteins, in association with DnaK and GrpE. It is the nucleotide exchange factor for DnaK and may function as a thermosensor. Unfolded proteins bind initially to DnaJ; upon interaction with the DnaJ-bound protein, DnaK hydrolyzes its bound ATP, resulting in the formation of a stable complex. GrpE releases ADP from DnaK; ATP binding to DnaK triggers the release of the substrate protein, thus completing the reaction cycle. Several rounds of ATP-dependent interactions between DnaJ, DnaK and GrpE are required for fully efficient folding. In Carboxydothermus hydrogenoformans (strain ATCC BAA-161 / DSM 6008 / Z-2901), this protein is Protein GrpE.